An 878-amino-acid chain; its full sequence is Glycogen [starch] synthase (878 aa).

Residue lysine 61 coordinates UDP-alpha-D-glucose. 2 disordered regions span residues 637-721 (PPKP…NVIP) and 746-878 (NEFK…KSLK). 2 stretches are compositionally biased toward low complexity: residues 641-656 (ISRS…LKLS) and 666-676 (QQQQQQQQPQP). The segment covering 677-692 (IGTTINLIPPSSNVSV) has biased composition (polar residues). 4 stretches are compositionally biased toward low complexity: residues 693–715 (TPTT…ITTP), 746–781 (NEFK…AAAT), 795–830 (PNTS…NGKP), and 838–878 (TKSN…KSLK).

The protein belongs to the glycosyltransferase 3 family.

It catalyses the reaction [(1-&gt;4)-alpha-D-glucosyl](n) + UDP-alpha-D-glucose = [(1-&gt;4)-alpha-D-glucosyl](n+1) + UDP + H(+). Its pathway is glycan biosynthesis; glycogen biosynthesis. Functionally, catalyzes the formation of apha-1,4 glycosidic bonds adding glucose residue from UDPG to the growing chain of glycogen. The chain is Glycogen [starch] synthase (glcS) from Dictyostelium discoideum (Social amoeba).